The sequence spans 431 residues: Peptidase B (431 aa).

Residues Lys-196 and Asp-201 each coordinate Mn(2+). Lys-208 is a catalytic residue. The Mn(2+) site is built by Asp-219, Asp-278, and Glu-280. Arg-282 is an active-site residue.

Belongs to the peptidase M17 family. In terms of assembly, homohexamer. Mn(2+) is required as a cofactor.

The protein resides in the cytoplasm. The catalysed reaction is Release of an N-terminal amino acid, Xaa, from a peptide or arylamide. Xaa is preferably Glu or Asp but may be other amino acids, including Leu, Met, His, Cys and Gln.. Probably plays an important role in intracellular peptide degradation. This chain is Peptidase B, found in Serratia proteamaculans (strain 568).